A 383-amino-acid polypeptide reads, in one-letter code: Acetylornithine deacetylase (383 aa).

His80 is a binding site for Zn(2+). The active site involves Asp82. Asp112 is a binding site for Zn(2+). Residue Glu144 is part of the active site. Zn(2+) contacts are provided by Glu145, Glu169, and His355.

Belongs to the peptidase M20A family. ArgE subfamily. In terms of assembly, homodimer. Requires Zn(2+) as cofactor. The cofactor is Co(2+). It depends on glutathione as a cofactor.

It is found in the cytoplasm. It carries out the reaction N(2)-acetyl-L-ornithine + H2O = L-ornithine + acetate. The protein operates within amino-acid biosynthesis; L-arginine biosynthesis; L-ornithine from N(2)-acetyl-L-ornithine (linear): step 1/1. In terms of biological role, catalyzes the hydrolysis of the amide bond of N(2)-acetylated L-amino acids. Cleaves the acetyl group from N-acetyl-L-ornithine to form L-ornithine, an intermediate in L-arginine biosynthesis pathway, and a branchpoint in the synthesis of polyamines. In Escherichia coli O9:H4 (strain HS), this protein is Acetylornithine deacetylase.